Here is a 217-residue protein sequence, read N- to C-terminus: Uracil-DNA glycosylase (217 aa).

Aspartate 62 serves as the catalytic Proton acceptor.

The protein belongs to the uracil-DNA glycosylase (UDG) superfamily. UNG family.

It localises to the cytoplasm. The enzyme catalyses Hydrolyzes single-stranded DNA or mismatched double-stranded DNA and polynucleotides, releasing free uracil.. In terms of biological role, excises uracil residues from the DNA which can arise as a result of misincorporation of dUMP residues by DNA polymerase or due to deamination of cytosine. The chain is Uracil-DNA glycosylase from Streptococcus pyogenes serotype M3 (strain ATCC BAA-595 / MGAS315).